A 371-amino-acid chain; its full sequence is COP9 signalosome complex subunit 5 (371 aa).

The MPN domain maps to 51-188 (VKISAVALIK…IGAFRTYPEG (138 aa)). His-134, His-136, and Asp-147 together coordinate Zn(2+). Residues 134–147 (HSHPGYGCWLSGID) carry the JAMM motif motif. Low complexity predominate over residues 278 to 292 (NSSSKLKLKPTQPTT). Disordered regions lie at residues 278–333 (NSSS…SRIT) and 352–371 (TPLT…QGRY). Over residues 293 to 313 (KGKETTEGSDKKLKKGEKEFS) the composition is skewed to basic and acidic residues. A compositionally biased stretch (polar residues) spans 323–333 (NKVTQESSRIT).

This sequence belongs to the peptidase M67A family. CSN5 subfamily. In terms of assembly, component of the COP9 signalosome (CSN) complex.

Its subcellular location is the cytoplasm. The protein localises to the nucleus. Functionally, catalytic Component of the COP9 signalosome (CSN) complex that acts as an regulator of the ubiquitin (Ubl) conjugation pathway by mediating the deneddylation of the cullin subunit of SCF-type E3 ubiquitin-protein ligase complexes. This is COP9 signalosome complex subunit 5 (RRI1) from Cryptococcus neoformans var. neoformans serotype D (strain B-3501A) (Filobasidiella neoformans).